The following is a 58-amino-acid chain: Metallothionein-1 (58 aa).

Residues 1-28 (PGPCCNDKCVCKEGGCKEGCQCTSCRCS) form a beta region. Cysteine 4, cysteine 5, cysteine 9, cysteine 11, cysteine 16, cysteine 20, cysteine 22, cysteine 25, cysteine 27, cysteine 30, cysteine 33, cysteine 37, cysteine 39, cysteine 45, cysteine 49, cysteine 53, cysteine 55, and cysteine 56 together coordinate a divalent metal cation. The segment at 29–58 (PCEKCSSGCKCANKEECSKTCSKACSCCPT) is alpha.

The protein belongs to the metallothionein superfamily. Type 3 family.

Functionally, metallothioneins have a high content of cysteine residues that bind various heavy metals. Class I MTS in marine crustacea are involved in the sequestration of elevated levels of heavy-metal ions. This is Metallothionein-1 from Scylla serrata (Mud crab).